Here is a 285-residue protein sequence, read N- to C-terminus: NAD kinase (285 aa).

D66 acts as the Proton acceptor in catalysis. NAD(+) is bound by residues 66 to 67 (DG), 137 to 138 (ND), R148, R165, D167, and 178 to 183 (TAYSLS).

The protein belongs to the NAD kinase family. A divalent metal cation serves as cofactor.

It localises to the cytoplasm. The enzyme catalyses NAD(+) + ATP = ADP + NADP(+) + H(+). In terms of biological role, involved in the regulation of the intracellular balance of NAD and NADP, and is a key enzyme in the biosynthesis of NADP. Catalyzes specifically the phosphorylation on 2'-hydroxyl of the adenosine moiety of NAD to yield NADP. This chain is NAD kinase, found in Chlorobium phaeobacteroides (strain BS1).